The primary structure comprises 474 residues: Tocopherol cyclase, chloroplastic (474 aa).

Residues Met-1–Arg-65 constitute a chloroplast transit peptide.

As to expression, present in all green tissues, both in bundle sheath and in mesophyll cells.

It is found in the plastid. It localises to the chloroplast. It carries out the reaction gamma-tocopherol = 2,3-dimethyl-6-phytylbenzene-1,4-diol. Its pathway is cofactor biosynthesis; tocopherol biosynthesis. In terms of biological role, involved in the synthesis of tocopherols (vitamin E), which presumably protect photosynthetic complexes from oxidative stress. Catalyzes the conversion of 2,3-dimethyl-5-phytyl-1,4-hydroquinone (DMPQ) to gamma-tocopherol. The chain is Tocopherol cyclase, chloroplastic from Zea mays (Maize).